Here is a 124-residue protein sequence, read N- to C-terminus: Small ribosomal subunit protein bS6 (124 aa).

The protein belongs to the bacterial ribosomal protein bS6 family.

In terms of biological role, binds together with bS18 to 16S ribosomal RNA. The polypeptide is Small ribosomal subunit protein bS6 (Haemophilus ducreyi (strain 35000HP / ATCC 700724)).